A 446-amino-acid chain; its full sequence is MSKKLYIKTYGCQMNVYDSVKMQDLLYPFGYESTENIKEADVIILNTCHIREKAAEKIYSELGRIKKLQDTRKKHGLSSAIIVVAGCVAQAEGEEIFTRTPYVDIVVGPQSYYNLPELISKVVRHEKHLIDLDFVEEAKFDQLPEQLYPQGASAFISVQEGCDKFCTFCVVPYTRGVEFSRNVEQVYREALKVVSNGAREIMLLGQNVNAYHGKGVDDKIFSLADLIRYLAQIPNLERLRYTTSHPIDMTDDLIKLHSIESKLMPFVHLPVQSGSNKILKAMNRKHDREYYFNIINRLREARPDIVLSSDFIVGFPGETDEDFEDTLDLVRKIKYGQCYSFKYSPRPGTPGATRTDQIPEHIKSERLTILQKELSSQQLAFNESCVGSTMKVLFDRSGKFDGQIIGKTPYMQSVYINNTNQDLLCKIIDVKITKATSNSLTGEIYT.

One can recognise an MTTase N-terminal domain in the interval 3–124 (KKLYIKTYGC…LPELISKVVR (122 aa)). [4Fe-4S] cluster is bound by residues Cys-12, Cys-48, Cys-87, Cys-162, Cys-166, and Cys-169. One can recognise a Radical SAM core domain in the interval 148–380 (YPQGASAFIS…QKELSSQQLA (233 aa)). The region spanning 383-446 (ESCVGSTMKV…SNSLTGEIYT (64 aa)) is the TRAM domain.

This sequence belongs to the methylthiotransferase family. MiaB subfamily. Monomer. [4Fe-4S] cluster is required as a cofactor.

The protein resides in the cytoplasm. It carries out the reaction N(6)-dimethylallyladenosine(37) in tRNA + (sulfur carrier)-SH + AH2 + 2 S-adenosyl-L-methionine = 2-methylsulfanyl-N(6)-dimethylallyladenosine(37) in tRNA + (sulfur carrier)-H + 5'-deoxyadenosine + L-methionine + A + S-adenosyl-L-homocysteine + 2 H(+). In terms of biological role, catalyzes the methylthiolation of N6-(dimethylallyl)adenosine (i(6)A), leading to the formation of 2-methylthio-N6-(dimethylallyl)adenosine (ms(2)i(6)A) at position 37 in tRNAs that read codons beginning with uridine. The sequence is that of tRNA-2-methylthio-N(6)-dimethylallyladenosine synthase from Rickettsia canadensis (strain McKiel).